The following is a 216-amino-acid chain: Imidazoleglycerol-phosphate dehydratase (216 aa).

The protein belongs to the imidazoleglycerol-phosphate dehydratase family.

The protein resides in the cytoplasm. The catalysed reaction is D-erythro-1-(imidazol-4-yl)glycerol 3-phosphate = 3-(imidazol-4-yl)-2-oxopropyl phosphate + H2O. It functions in the pathway amino-acid biosynthesis; L-histidine biosynthesis; L-histidine from 5-phospho-alpha-D-ribose 1-diphosphate: step 6/9. This is Imidazoleglycerol-phosphate dehydratase from Nocardia farcinica (strain IFM 10152).